The following is a 476-amino-acid chain: Glycogen synthase (476 aa).

K15 is an ADP-alpha-D-glucose binding site.

Belongs to the glycosyltransferase 1 family. Bacterial/plant glycogen synthase subfamily.

It carries out the reaction [(1-&gt;4)-alpha-D-glucosyl](n) + ADP-alpha-D-glucose = [(1-&gt;4)-alpha-D-glucosyl](n+1) + ADP + H(+). It functions in the pathway glycan biosynthesis; glycogen biosynthesis. Synthesizes alpha-1,4-glucan chains using ADP-glucose. This Bacillus cereus (strain ZK / E33L) protein is Glycogen synthase.